Here is a 272-residue protein sequence, read N- to C-terminus: Acetylglutamate kinase (272 aa).

Residues 46-47 (GA), Arg-68, and Asn-166 contribute to the substrate site.

This sequence belongs to the acetylglutamate kinase family. ArgB subfamily.

It localises to the cytoplasm. It catalyses the reaction N-acetyl-L-glutamate + ATP = N-acetyl-L-glutamyl 5-phosphate + ADP. It functions in the pathway amino-acid biosynthesis; L-arginine biosynthesis; N(2)-acetyl-L-ornithine from L-glutamate: step 2/4. Functionally, catalyzes the ATP-dependent phosphorylation of N-acetyl-L-glutamate. The chain is Acetylglutamate kinase from Dehalococcoides mccartyi (strain ATCC BAA-2266 / KCTC 15142 / 195) (Dehalococcoides ethenogenes (strain 195)).